The chain runs to 215 residues: Cytochrome b6 (215 aa).

Residues 32 to 52 form a helical membrane-spanning segment; the sequence is IFYCLGGITLTCFLVQVATGF. Cysteine 35 is a heme c binding site. Heme b contacts are provided by histidine 86 and histidine 100. Helical transmembrane passes span 90–110, 116–136, and 186–206; these read ASMM…TGGF, LTWV…VTGY, and LHTF…FPMI. Positions 187 and 202 each coordinate heme b.

This sequence belongs to the cytochrome b family. PetB subfamily. As to quaternary structure, the 4 large subunits of the cytochrome b6-f complex are cytochrome b6, subunit IV (17 kDa polypeptide, PetD), cytochrome f and the Rieske protein, while the 4 small subunits are PetG, PetL, PetM and PetN. The complex functions as a dimer. Heme b is required as a cofactor. Requires heme c as cofactor.

Its subcellular location is the plastid. It is found in the chloroplast thylakoid membrane. Functionally, component of the cytochrome b6-f complex, which mediates electron transfer between photosystem II (PSII) and photosystem I (PSI), cyclic electron flow around PSI, and state transitions. The polypeptide is Cytochrome b6 (Jasminum nudiflorum (Winter jasmine)).